Here is a 266-residue protein sequence, read N- to C-terminus: 3-methyl-2-oxobutanoate hydroxymethyltransferase (266 aa).

Mg(2+)-binding residues include D45 and D84. 3-methyl-2-oxobutanoate contacts are provided by residues 45–46, D84, and K112; that span reads DS. E114 lines the Mg(2+) pocket. Catalysis depends on E181, which acts as the Proton acceptor.

It belongs to the PanB family. As to quaternary structure, homodecamer; pentamer of dimers. The cofactor is Mg(2+).

Its subcellular location is the cytoplasm. It carries out the reaction 3-methyl-2-oxobutanoate + (6R)-5,10-methylene-5,6,7,8-tetrahydrofolate + H2O = 2-dehydropantoate + (6S)-5,6,7,8-tetrahydrofolate. It participates in cofactor biosynthesis; (R)-pantothenate biosynthesis; (R)-pantoate from 3-methyl-2-oxobutanoate: step 1/2. In terms of biological role, catalyzes the reversible reaction in which hydroxymethyl group from 5,10-methylenetetrahydrofolate is transferred onto alpha-ketoisovalerate to form ketopantoate. The protein is 3-methyl-2-oxobutanoate hydroxymethyltransferase of Stutzerimonas stutzeri (strain A1501) (Pseudomonas stutzeri).